The primary structure comprises 314 residues: Deacetoxycephalosporin C synthase (314 aa).

Residues 156–269 form the Fe2OG dioxygenase domain; that stretch reads DCEPLLRLRY…RTSSVFFLRP (114 aa).

The protein belongs to the iron/ascorbate-dependent oxidoreductase family. Fe cation serves as cofactor. The cofactor is L-ascorbate.

It carries out the reaction penicillin N + 2-oxoglutarate + O2 = deacetoxycephalosporin C + succinate + CO2 + H2O. Its pathway is antibiotic biosynthesis; cephalosporin C biosynthesis. In terms of biological role, catalyzes the step from penicillin N to deacetoxy-cephalosporin C. The sequence is that of Deacetoxycephalosporin C synthase (cefE) from Amycolatopsis lactamdurans (Nocardia lactamdurans).